Consider the following 234-residue polypeptide: Glutathione S-transferase U11 (234 aa).

The GST N-terminal domain occupies Glu-11 to Pro-90. Glutathione-binding positions include Ser-21–Pro-22, Leu-47–Ser-48, Gln-61–Ile-62, and Glu-74–Ser-75. Residues Asp-96 to Phe-228 enclose the GST C-terminal domain.

It belongs to the GST superfamily. Tau family.

The protein resides in the cytoplasm. It localises to the cytosol. The enzyme catalyses RX + glutathione = an S-substituted glutathione + a halide anion + H(+). Functionally, may be involved in the conjugation of reduced glutathione to a wide number of exogenous and endogenous hydrophobic electrophiles and have a detoxification role against certain herbicides. In Arabidopsis thaliana (Mouse-ear cress), this protein is Glutathione S-transferase U11 (GSTU11).